A 129-amino-acid chain; its full sequence is MGPRGAPLLAVVLVLGLHALVEGEKPSPCRCSRLTPHNRKNCGFPGITSEQCFDLGCCFDSSVAGVPWCFHPLPNQESEQCVMEVSARKNCGYPGISPEDCASRNCCFSNLIFEVPWCFFPQSVEDCHY.

Positions 1–23 (MGPRGAPLLAVVLVLGLHALVEG) are cleaved as a signal peptide. 2 P-type domains span residues 29–73 (CRCS…FHPL) and 79–122 (EQCV…FFPQ). 7 disulfides stabilise this stretch: Cys29/Cys127, Cys31/Cys58, Cys42/Cys57, Cys52/Cys69, Cys81/Cys107, Cys91/Cys106, and Cys101/Cys118.

In terms of tissue distribution, stomach and pancreas.

The protein localises to the secreted. Its function is as follows. Inhibits gastrointestinal motility and gastric acid secretion. Could function as a structural component of gastric mucus, possibly by stabilizing glycoproteins in the mucus gel through interactions with carbohydrate side chains. In Mus musculus (Mouse), this protein is Trefoil factor 2 (Tff2).